The following is a 337-amino-acid chain: Angiopoietin-related protein 7 (337 aa).

Positions 1–21 (MLRETWLCVILVAFVSHPVWL) are cleaved as a signal peptide. The stretch at 30 to 110 (QLKAAGCCEE…DIMQLQAAQT (81 aa)) forms a coiled coil. The N-linked (GlcNAc...) asparagine glycan is linked to Asn49. The Fibrinogen C-terminal domain maps to 113–334 (QTSADAIYDC…RVEMKIRPEA (222 aa)). A disulfide bridge links Cys122 with Cys153. N-linked (GlcNAc...) asparagine glycans are attached at residues Asn244 and Asn258. The cysteines at positions 276 and 289 are disulfide-linked. An N-linked (GlcNAc...) asparagine glycan is attached at Asn320.

In terms of assembly, homotetramer; disulfide-linked.

It is found in the secreted. Its function is as follows. Has a role in the formation and organization of the extracellular matrix. In the eye, it functions as a mediator of dexamethasone-induced matrix deposition in the trabecular meshwork, the tissue responsible for the outflow of the ocular aqueous humor and for the maintenance of intraocular pressure. Is a negative regulator of angiogenesis in the cornea, and plays a major role in maintaining corneal avascularity and transparency. This is Angiopoietin-related protein 7 (Angptl7) from Mus musculus (Mouse).